We begin with the raw amino-acid sequence, 122 residues long: Large ribosomal subunit protein uL14 (122 aa).

Belongs to the universal ribosomal protein uL14 family. In terms of assembly, part of the 50S ribosomal subunit. Forms a cluster with proteins L3 and L19. In the 70S ribosome, L14 and L19 interact and together make contacts with the 16S rRNA in bridges B5 and B8.

Functionally, binds to 23S rRNA. Forms part of two intersubunit bridges in the 70S ribosome. The polypeptide is Large ribosomal subunit protein uL14 (Streptococcus thermophilus (strain CNRZ 1066)).